The sequence spans 473 residues: Cannabinoid receptor 1 (473 aa).

Residues 1–121 (MKSILDGLAD…LNPSQQLAIA (121 aa)) are Extracellular-facing. The segment at 2 to 23 (KSILDGLADTTFRTITTDLLYV) is required for mitochondrial localization. N-linked (GlcNAc...) asparagine glycosylation is found at Asn-78 and Asn-84. The helical transmembrane segment at 122–142 (VLSLTLGTFTVLENLLVLCVI) threads the bilayer. The Cytoplasmic portion of the chain corresponds to 143 to 155 (LHSRSLRCRPSYH). The chain crosses the membrane as a helical span at residues 156-176 (FIGSLAVADLLGSVIFVYSFV). At 177–188 (DFHVFHRKDSPN) the chain is on the extracellular side. Residues 189-209 (VFLFKLGGVTASFTASVGSLF) form a helical membrane-spanning segment. At 210–233 (LTAIDRYISIHRPLAYKRIVTRPK) the chain is on the cytoplasmic side. Residues 234 to 254 (AVVAFCLMWTIAIVIAVLPLL) traverse the membrane as a helical segment. The Extracellular portion of the chain corresponds to 255 to 278 (GWNCKKLQSVCSDIFPLIDETYLM). The helical transmembrane segment at 279–299 (FWIGVTSVLLLFIVYAYMYIL) threads the bilayer. The Cytoplasmic segment spans residues 300–345 (WKAHSHAVRMIQRGTQKSIIIHTSEDGKVQVTRPDQARMDIRLAKT). Residues 346–366 (LVLILVVLIICWGPLLAIMVY) traverse the membrane as a helical segment. The Extracellular segment spans residues 367–378 (DVFGKMNKLIKT). A helical membrane pass occupies residues 379-399 (VFAFCSMLCLLNSTVNPIIYA). Residues 400 to 473 (LRSKDLRHAF…VSTDTSAEAL (74 aa)) are Cytoplasmic-facing. The S-palmitoyl cysteine moiety is linked to residue Cys-416. Phosphoserine is present on residues Ser-426 and Ser-430.

The protein belongs to the G-protein coupled receptor 1 family. As to quaternary structure, interacts (via C-terminus) with CNRIP1. Associates with G protein alpha subunits, including G(i) alpha-1/GNAI1, G(i) alpha-3/GNAI3 and G(o)-alpha/GNAO1; palmitoylation is important for interaction with GNAI3 and GNAO1. In terms of processing, palmitoylation at Cys-416 is important for recruitment at both plasma membrane and lipid rafts and association with G protein alpha subunits. As to expression, expressed in brain neurons (at protein level). Detected throughout the striatum, cortex and hippocampus, with highest levels in the lateral striatum. In rostral brain regions, high expression levels in the dorsal lateral striatum, while in the caudal brain regions, high levels are observed in the ventral lateral striatum. Expressed in neurons. In the hypothalamus, expressed in both GABAergic and glutamatergic presynaptic terminals of POMC neurons (at protein level). Expressed in striated muscles, including skeletal muscles (gastrocnemius and rectus abdominis) and myocardium (at protein level). Expressed in the liver, with highest levels in Kupffer cells and lower levels in endothelial cells as well as hepatocytes, particularly in perivascular areas (at protein level). The hepatic expression level is up-regulated in obese mice compared to lean animals.

The protein localises to the cell membrane. The protein resides in the mitochondrion outer membrane. It localises to the cell projection. It is found in the axon. Its subcellular location is the presynapse. Its activity is regulated as follows. Hemopressin, a peptide derived from hemoglobin subunit alpha (HBA1 and/or HBA2), acts as an antagonist peptide: hemopressin-binding efficiently blocks cannabinoid receptor CNR1 and subsequent signaling. G-protein coupled receptor for cannabinoids, including endocannabinoids (eCBs), such as N-arachidonoylethanolamide (also called anandamide or AEA) and 2-arachidonoylglycerol (2-AG). Mediates many cannabinoid-induced effects, acting, among others, on food intake, memory loss, gastrointestinal motility, catalepsy, ambulatory activity, anxiety, chronic pain. Signaling typically involves reduction in cyclic AMP. In the hypothalamus, may have a dual effect on mitochondrial respiration depending upon the agonist dose and possibly upon the cell type. Increases respiration at low doses, while decreases respiration at high doses. At high doses, CNR1 signal transduction involves G-protein alpha-i protein activation and subsequent inhibition of mitochondrial soluble adenylate cyclase, decrease in cyclic AMP concentration, inhibition of protein kinase A (PKA)-dependent phosphorylation of specific subunits of the mitochondrial electron transport system, including NDUFS2. In the hypothalamus, inhibits leptin-induced reactive oxygen species (ROS) formation and mediates cannabinoid-induced increase in SREBF1 and FASN gene expression. In response to cannabinoids, drives the release of orexigenic beta-endorphin, but not that of melanocyte-stimulating hormone alpha/alpha-MSH, from hypothalamic POMC neurons, hence promoting food intake. In the hippocampus, regulates cellular respiration and energy production in response to cannabinoids. Involved in cannabinoid-dependent depolarization-induced suppression of inhibition (DSI), a process in which depolarization of CA1 postsynaptic pyramidal neurons mobilizes eCBs, which retrogradely activate presynaptic CB1 receptors, transiently decreasing GABAergic inhibitory neurotransmission. Also reduces excitatory synaptic transmission. In superior cervical ganglions and cerebral vascular smooth muscle cells, inhibits voltage-gated Ca(2+) channels in a constitutive, as well as agonist-dependent manner. In cerebral vascular smooth muscle cells, cannabinoid-induced inhibition of voltage-gated Ca(2+) channels leads to vasodilation and decreased vascular tone. Induces leptin production in adipocytes and reduces LRP2-mediated leptin clearance in the kidney, hence participating in hyperleptinemia. In adipose tissue, CNR1 signaling leads to increased expression of SREBF1, ACACA and FASN genes. In the liver, activation by endocannabinoids leads to increased de novo lipogenesis and reduced fatty acid catabolism, associated with increased expression of SREBF1/SREBP-1, GCK, ACACA, ACACB and FASN genes. May also affect de novo cholesterol synthesis and HDL-cholesteryl ether uptake. Peripherally modulates energy metabolism. In high carbohydrate diet-induced obesity, may decrease the expression of mitochondrial dihydrolipoyl dehydrogenase/DLD in striated muscles, as well as that of selected glucose/ pyruvate metabolic enzymes, hence affecting energy expenditure through mitochondrial metabolism. In response to cannabinoid anandamide, elicits a pro-inflammatory response in macrophages, which involves NLRP3 inflammasome activation and IL1B and IL18 secretion. In macrophages infiltrating pancreatic islets, this process may participate in the progression of type-2 diabetes and associated loss of pancreatic beta-cells. The protein is Cannabinoid receptor 1 (Cnr1) of Mus musculus (Mouse).